The chain runs to 416 residues: Serine hydroxymethyltransferase (416 aa).

(6S)-5,6,7,8-tetrahydrofolate is bound by residues Leu-121 and 125 to 127; that span reads GHL. Lys-229 carries the N6-(pyridoxal phosphate)lysine modification.

This sequence belongs to the SHMT family. In terms of assembly, homodimer. Requires pyridoxal 5'-phosphate as cofactor.

It is found in the cytoplasm. The catalysed reaction is (6R)-5,10-methylene-5,6,7,8-tetrahydrofolate + glycine + H2O = (6S)-5,6,7,8-tetrahydrofolate + L-serine. The protein operates within one-carbon metabolism; tetrahydrofolate interconversion. It functions in the pathway amino-acid biosynthesis; glycine biosynthesis; glycine from L-serine: step 1/1. Catalyzes the reversible interconversion of serine and glycine with tetrahydrofolate (THF) serving as the one-carbon carrier. This reaction serves as the major source of one-carbon groups required for the biosynthesis of purines, thymidylate, methionine, and other important biomolecules. Also exhibits THF-independent aldolase activity toward beta-hydroxyamino acids, producing glycine and aldehydes, via a retro-aldol mechanism. This chain is Serine hydroxymethyltransferase, found in Neisseria meningitidis serogroup C / serotype 2a (strain ATCC 700532 / DSM 15464 / FAM18).